The primary structure comprises 313 residues: Small ribosomal subunit protein uS2 (313 aa).

The segment covering 233–256 has biased composition (basic and acidic residues); it reads RTMTDKQSDVAKEAKADGKEEAPK. The interval 233-293 is disordered; sequence RTMTDKQSDV…SRKLVAAGTA (61 aa).

It belongs to the universal ribosomal protein uS2 family.

The chain is Small ribosomal subunit protein uS2 from Bdellovibrio bacteriovorus (strain ATCC 15356 / DSM 50701 / NCIMB 9529 / HD100).